The primary structure comprises 404 residues: Tryptophan synthase beta chain (404 aa).

Lys99 carries the post-translational modification N6-(pyridoxal phosphate)lysine.

It belongs to the TrpB family. Tetramer of two alpha and two beta chains. The cofactor is pyridoxal 5'-phosphate.

It carries out the reaction (1S,2R)-1-C-(indol-3-yl)glycerol 3-phosphate + L-serine = D-glyceraldehyde 3-phosphate + L-tryptophan + H2O. It functions in the pathway amino-acid biosynthesis; L-tryptophan biosynthesis; L-tryptophan from chorismate: step 5/5. The beta subunit is responsible for the synthesis of L-tryptophan from indole and L-serine. In Rhizobium rhizogenes (strain K84 / ATCC BAA-868) (Agrobacterium radiobacter), this protein is Tryptophan synthase beta chain.